Here is a 220-residue protein sequence, read N- to C-terminus: 14-3-3-like protein (220 aa).

The protein belongs to the 14-3-3 family.

The sequence is that of 14-3-3-like protein from Spinacia oleracea (Spinach).